A 351-amino-acid chain; its full sequence is Methionine import ATP-binding protein MetN (351 aa).

The 246-residue stretch at 4-249 folds into the ABC transporter domain; sequence VQLDHVSVTF…PKAELTQKFV (246 aa). Residue 41-48 participates in ATP binding; sequence GFSGAGKS.

It belongs to the ABC transporter superfamily. Methionine importer (TC 3.A.1.24) family. As to quaternary structure, the complex is composed of two ATP-binding proteins (MetN), two transmembrane proteins (MetI) and a solute-binding protein (MetQ).

The protein localises to the cell membrane. It catalyses the reaction L-methionine(out) + ATP + H2O = L-methionine(in) + ADP + phosphate + H(+). The catalysed reaction is D-methionine(out) + ATP + H2O = D-methionine(in) + ADP + phosphate + H(+). Functionally, part of the ABC transporter complex MetNIQ involved in methionine import. Responsible for energy coupling to the transport system. The protein is Methionine import ATP-binding protein MetN of Lactobacillus delbrueckii subsp. bulgaricus (strain ATCC 11842 / DSM 20081 / BCRC 10696 / JCM 1002 / NBRC 13953 / NCIMB 11778 / NCTC 12712 / WDCM 00102 / Lb 14).